The following is a 92-amino-acid chain: Small ribosomal subunit protein bS18 (92 aa).

The protein belongs to the bacterial ribosomal protein bS18 family. In terms of assembly, part of the 30S ribosomal subunit. Forms a tight heterodimer with protein bS6.

Its function is as follows. Binds as a heterodimer with protein bS6 to the central domain of the 16S rRNA, where it helps stabilize the platform of the 30S subunit. The chain is Small ribosomal subunit protein bS18 from Cupriavidus necator (strain ATCC 17699 / DSM 428 / KCTC 22496 / NCIMB 10442 / H16 / Stanier 337) (Ralstonia eutropha).